The sequence spans 146 residues: Ribosomal RNA large subunit methyltransferase H (146 aa).

S-adenosyl-L-methionine is bound by residues L60, G93, and 112–117 (MGKMTL).

Belongs to the RNA methyltransferase RlmH family. As to quaternary structure, homodimer.

The protein resides in the cytoplasm. It carries out the reaction pseudouridine(1915) in 23S rRNA + S-adenosyl-L-methionine = N(3)-methylpseudouridine(1915) in 23S rRNA + S-adenosyl-L-homocysteine + H(+). Its function is as follows. Specifically methylates the pseudouridine at position 1915 (m3Psi1915) in 23S rRNA. The sequence is that of Ribosomal RNA large subunit methyltransferase H from Koribacter versatilis (strain Ellin345).